The primary structure comprises 152 residues: UPF0225 protein YchJ (152 aa).

This sequence belongs to the UPF0225 family.

The chain is UPF0225 protein YchJ from Salmonella gallinarum (strain 287/91 / NCTC 13346).